Consider the following 245-residue polypeptide: Ribosomal protein L11 methyltransferase (245 aa).

Residues Thr-101, Gly-122, Asp-144, and Asn-184 each contribute to the S-adenosyl-L-methionine site.

Belongs to the methyltransferase superfamily. PrmA family.

Its subcellular location is the cytoplasm. It catalyses the reaction L-lysyl-[protein] + 3 S-adenosyl-L-methionine = N(6),N(6),N(6)-trimethyl-L-lysyl-[protein] + 3 S-adenosyl-L-homocysteine + 3 H(+). Methylates ribosomal protein L11. This Aquifex aeolicus (strain VF5) protein is Ribosomal protein L11 methyltransferase.